The primary structure comprises 59 residues: UPF0434 protein Sputw3181_2540 (59 aa).

Belongs to the UPF0434 family.

The protein is UPF0434 protein Sputw3181_2540 of Shewanella sp. (strain W3-18-1).